A 538-amino-acid polypeptide reads, in one-letter code: Putative outer membrane porin BglH (538 aa).

An N-terminal signal peptide occupies residues 1-25 (MFRRNIITSAILLMAPLAFSAQSLA).

The protein belongs to the porin LamB (TC 1.B.3) family.

The protein localises to the cell outer membrane. Functionally, may be a sugar porin with a broad carbohydrate specificity. The chain is Putative outer membrane porin BglH (bglH) from Escherichia coli (strain UTI89 / UPEC).